A 309-amino-acid polypeptide reads, in one-letter code: Ribosomal protein L11 methyltransferase (309 aa).

S-adenosyl-L-methionine-binding residues include T152, G178, D200, and N242.

The protein belongs to the methyltransferase superfamily. PrmA family.

The protein localises to the cytoplasm. The enzyme catalyses L-lysyl-[protein] + 3 S-adenosyl-L-methionine = N(6),N(6),N(6)-trimethyl-L-lysyl-[protein] + 3 S-adenosyl-L-homocysteine + 3 H(+). Functionally, methylates ribosomal protein L11. This chain is Ribosomal protein L11 methyltransferase, found in Pelobacter propionicus (strain DSM 2379 / NBRC 103807 / OttBd1).